A 163-amino-acid chain; its full sequence is uncharacterized protein (163 aa).

This is an uncharacterized protein from Haemophilus phage HP1 (strain HP1c1) (Bacteriophage HP1).